The primary structure comprises 71 residues: UPF0434 protein Meso_3270 (71 aa).

It belongs to the UPF0434 family.

The sequence is that of UPF0434 protein Meso_3270 from Chelativorans sp. (strain BNC1).